Reading from the N-terminus, the 476-residue chain is MKILHVCSELYPLLKTGGLADVLGALPQAQNQIGLDARFLLPAYPAITTGIPNTQVVAEFDNFAGHVVLRYGEYNGVGIYLIDAPHLYGREGNPYHDAYYNDYGDNYKRFALLGWVGAELATGLDSWWRAEVVHAHDWHAGLCVAYLFNKGKPAKSVFTIHNLAYQGQFSYHHLYEIGLPTGMFHVEGLELFGQISYLKSGLFYSDASTAVSPTYAQEITTPEFAYGLQGLLSGLKAQGRLVGILNGVDENIWHPNVDQYIPHHYKLKYMAGKKKNKAELQAYFNLPQDESALAFVMVTRLTEQKGVDLLIESADEIVKQGGQLMILGSGAPHLEQGIRELAERYPQNIAVKIGYDEALSHLMVAGGDVILVPSRFEPCGLTQLYGLQYGTLPLVRKTGGLADTVVDSTSESIKARTATGFVFESATPEALRHCLQRAFALWQKPRAWAMVRTDAMEQDFSWRKAAEQYRTLYERL.

Lys-15 contributes to the ADP-alpha-D-glucose binding site.

Belongs to the glycosyltransferase 1 family. Bacterial/plant glycogen synthase subfamily.

It catalyses the reaction [(1-&gt;4)-alpha-D-glucosyl](n) + ADP-alpha-D-glucose = [(1-&gt;4)-alpha-D-glucosyl](n+1) + ADP + H(+). The protein operates within glycan biosynthesis; glycogen biosynthesis. Synthesizes alpha-1,4-glucan chains using ADP-glucose. The sequence is that of Glycogen synthase (glgA) from Haemophilus influenzae (strain ATCC 51907 / DSM 11121 / KW20 / Rd).